The sequence spans 161 residues: MQANSRAYFLLIAFISFGLVGFALYLQFEKGYQPCPLCIMQRFAFIGIGLFSLLAVIAQNTRSLWQGLGMLSGVGGIAVAVYHVSLLLNPKASCGIDPLENWVNALPTAKVLPQVFYSDGLCTAPLPPVLGLSVPAWSLIWLFILTLTLAVGLIRREKNFR.

Residues 1-8 (MQANSRAY) lie on the Cytoplasmic side of the membrane. The chain crosses the membrane as a helical span at residues 9 to 25 (FLLIAFISFGLVGFALY). Residues 26–43 (LQFEKGYQPCPLCIMQRF) lie on the Periplasmic side of the membrane. C35 and C38 are disulfide-bonded. A helical membrane pass occupies residues 44–58 (AFIGIGLFSLLAVIA). Topologically, residues 59–63 (QNTRS) are cytoplasmic. A helical transmembrane segment spans residues 64-81 (LWQGLGMLSGVGGIAVAV). Residues 82–136 (YHVSLLLNPKASCGIDPLENWVNALPTAKVLPQVFYSDGLCTAPLPPVLGLSVPA) are Periplasmic-facing. The cysteines at positions 94 and 122 are disulfide-linked. A helical transmembrane segment spans residues 137–155 (WSLIWLFILTLTLAVGLIR). Residues 156–161 (REKNFR) are Cytoplasmic-facing.

It belongs to the DsbB family.

It localises to the cell inner membrane. Required for disulfide bond formation in some periplasmic proteins. Acts by oxidizing the DsbA protein. The protein is Disulfide bond formation protein B of Cupriavidus pinatubonensis (strain JMP 134 / LMG 1197) (Cupriavidus necator (strain JMP 134)).